A 370-amino-acid polypeptide reads, in one-letter code: GTPase Obg (370 aa).

Residues 1 to 159 (MKFIDEARIE…RMVRLELKVL (159 aa)) form the Obg domain. The segment at 127 to 147 (NLHFKSSTNRAPRQKTDGKPG) is disordered. An OBG-type G domain is found at 160–334 (ADVGLLGMPN…LCYAVYDYLA (175 aa)). GTP is bound by residues 166–173 (GMPNAGKS), 191–195 (FTTLA), 213–216 (DIPG), 284–287 (NKLD), and 315–317 (SAL). The Mg(2+) site is built by serine 173 and threonine 193.

The protein belongs to the TRAFAC class OBG-HflX-like GTPase superfamily. OBG GTPase family. Monomer. Mg(2+) serves as cofactor.

Its subcellular location is the cytoplasm. Its function is as follows. An essential GTPase which binds GTP, GDP and possibly (p)ppGpp with moderate affinity, with high nucleotide exchange rates and a fairly low GTP hydrolysis rate. Plays a role in control of the cell cycle, stress response, ribosome biogenesis and in those bacteria that undergo differentiation, in morphogenesis control. This chain is GTPase Obg, found in Paraburkholderia phymatum (strain DSM 17167 / CIP 108236 / LMG 21445 / STM815) (Burkholderia phymatum).